A 136-amino-acid chain; its full sequence is MSATHHKTSLPQGVRVGTVMRIRGLVPDQAGRFHVNLLCGEEQGADAALHFNPRLDTSEVVFNTKQQGKWGREERGTGIPFQRGQPFEVLLIATEEGFKAVVGDDEYLHFHHRLPPARVRLVEVGGDVQLHSLNIF.

The Galectin domain maps to 6 to 136 (HKTSLPQGVR…DVQLHSLNIF (131 aa)). 70 to 76 (WGREERG) provides a ligand contact to a beta-D-galactoside.

Monomer.

It localises to the cytoplasm. Its subcellular location is the nucleus. It is found in the secreted. Its function is as follows. Could be involved in cell-cell and/or cell-matrix interactions necessary for normal growth control. Pro-apoptotic protein that functions intracellularly upstream of JNK activation and cytochrome c release. In Mus musculus (Mouse), this protein is Galectin-7 (Lgals7).